Consider the following 148-residue polypeptide: MNVSFAPLFLVTLILLGVVSNNNSITISATILLLMQQTALIQFVPLVEKHGLNLGIILLTIGVLSPLVSGKAQVPPVAEFLNFKMISAVFIGIFVAWLAGRGVPLMGQQPVLITGLLIGTVIGVAFMGGIPVGPLIAAGILSFVVGKG.

A run of 4 helical transmembrane segments spans residues 13-35 (LILL…LLLM), 50-70 (HGLN…LVSG), 80-100 (FLNF…WLAG), and 121-141 (VIGV…AGIL).

This sequence belongs to the UPF0756 family.

It localises to the cell membrane. This chain is UPF0756 membrane protein NMCC_1816, found in Neisseria meningitidis serogroup C (strain 053442).